The following is a 139-amino-acid chain: Putative nickel-responsive regulator (139 aa).

The Ni(2+) site is built by H79, H90, H92, and C98.

This sequence belongs to the transcriptional regulatory CopG/NikR family. Requires Ni(2+) as cofactor.

Transcriptional regulator. In Pelobacter propionicus (strain DSM 2379 / NBRC 103807 / OttBd1), this protein is Putative nickel-responsive regulator.